Reading from the N-terminus, the 81-residue chain is Photosystem I iron-sulfur center (81 aa).

4Fe-4S ferredoxin-type domains are found at residues 2-31 (SHSV…MIPW) and 39-68 (IAPA…VRVY). [4Fe-4S] cluster is bound by residues C11, C14, C17, C21, C48, C51, C54, and C58.

In terms of assembly, the eukaryotic PSI reaction center is composed of at least 11 subunits. [4Fe-4S] cluster is required as a cofactor.

It is found in the plastid. The protein resides in the chloroplast thylakoid membrane. The enzyme catalyses reduced [plastocyanin] + hnu + oxidized [2Fe-2S]-[ferredoxin] = oxidized [plastocyanin] + reduced [2Fe-2S]-[ferredoxin]. Apoprotein for the two 4Fe-4S centers FA and FB of photosystem I (PSI); essential for photochemical activity. FB is the terminal electron acceptor of PSI, donating electrons to ferredoxin. The C-terminus interacts with PsaA/B/D and helps assemble the protein into the PSI complex. Required for binding of PsaD and PsaE to PSI. PSI is a plastocyanin-ferredoxin oxidoreductase, converting photonic excitation into a charge separation, which transfers an electron from the donor P700 chlorophyll pair to the spectroscopically characterized acceptors A0, A1, FX, FA and FB in turn. The chain is Photosystem I iron-sulfur center from Drimys granadensis.